Consider the following 531-residue polypeptide: UPF0159 protein CPn_0746/CP_1126/CPj0746/CpB0774 (531 aa).

2 ThyX domains span residues 38 to 274 and 309 to 511; these read KGAL…AEPH and PSVQ…FKFV.

Belongs to the UPF0159 family.

This is UPF0159 protein CPn_0746/CP_1126/CPj0746/CpB0774 from Chlamydia pneumoniae (Chlamydophila pneumoniae).